Here is a 576-residue protein sequence, read N- to C-terminus: Pentatricopeptide repeat-containing protein At1g79080, chloroplastic (576 aa).

A chloroplast-targeting transit peptide spans 1–37; sequence MSTLLNSVLSMASPESSPRKAVGFVSHIPSGFLHFSS. PPR repeat units follow at residues 105-139, 140-174, 175-209, 210-244, 245-279, 280-314, 315-349, 352-386, 387-417, 422-456, 457-487, 493-527, and 528-562; these read NVAH…GIIP, DASA…GYPS, NTVT…GLAP, NAFT…GGEP, NLVS…GFKA, NVVS…DRAP, SVVT…NHQF, TATS…RCKP, NEGT…LSNK, THDF…GFDP, DAHT…MEES, TVDN…KRMP, and NETT…KVIG.

The protein belongs to the PPR family. P subfamily.

It localises to the plastid. The protein localises to the chloroplast. The protein is Pentatricopeptide repeat-containing protein At1g79080, chloroplastic of Arabidopsis thaliana (Mouse-ear cress).